A 116-amino-acid chain; its full sequence is Holo-[acyl-carrier-protein] synthase (116 aa).

Aspartate 8 and glutamate 59 together coordinate Mg(2+).

It belongs to the P-Pant transferase superfamily. AcpS family. The cofactor is Mg(2+).

The protein localises to the cytoplasm. The catalysed reaction is apo-[ACP] + CoA = holo-[ACP] + adenosine 3',5'-bisphosphate + H(+). In terms of biological role, transfers the 4'-phosphopantetheine moiety from coenzyme A to a Ser of acyl-carrier-protein. This chain is Holo-[acyl-carrier-protein] synthase, found in Staphylococcus saprophyticus subsp. saprophyticus (strain ATCC 15305 / DSM 20229 / NCIMB 8711 / NCTC 7292 / S-41).